Consider the following 184-residue polypeptide: Adenine phosphoribosyltransferase (184 aa).

Belongs to the purine/pyrimidine phosphoribosyltransferase family. In terms of assembly, homodimer.

The protein resides in the cytoplasm. It catalyses the reaction AMP + diphosphate = 5-phospho-alpha-D-ribose 1-diphosphate + adenine. It participates in purine metabolism; AMP biosynthesis via salvage pathway; AMP from adenine: step 1/1. Its function is as follows. Catalyzes a salvage reaction resulting in the formation of AMP, that is energically less costly than de novo synthesis. This Corynebacterium diphtheriae (strain ATCC 700971 / NCTC 13129 / Biotype gravis) protein is Adenine phosphoribosyltransferase.